The sequence spans 128 residues: Large ribosomal subunit protein bL17 (128 aa).

This sequence belongs to the bacterial ribosomal protein bL17 family. In terms of assembly, part of the 50S ribosomal subunit. Contacts protein L32.

This chain is Large ribosomal subunit protein bL17, found in Streptococcus gordonii (strain Challis / ATCC 35105 / BCRC 15272 / CH1 / DL1 / V288).